The following is a 266-amino-acid chain: Putative carbamate hydrolase RutD (266 aa).

Residues 14-238 (PVVVLSAGLG…RVEMPWGGHA (225 aa)) enclose the AB hydrolase-1 domain.

It belongs to the AB hydrolase superfamily. Hydrolase RutD family.

It catalyses the reaction carbamate + 2 H(+) = NH4(+) + CO2. In terms of biological role, involved in pyrimidine catabolism. May facilitate the hydrolysis of carbamate, a reaction that can also occur spontaneously. The polypeptide is Putative carbamate hydrolase RutD (Klebsiella pneumoniae (strain 342)).